We begin with the raw amino-acid sequence, 620 residues long: 1-deoxy-D-xylulose-5-phosphate synthase (620 aa).

Thiamine diphosphate-binding positions include histidine 80 and 121 to 123 (GHS). Aspartate 152 provides a ligand contact to Mg(2+). Thiamine diphosphate is bound by residues 153 to 154 (GA), asparagine 181, tyrosine 288, and glutamate 370. Mg(2+) is bound at residue asparagine 181.

The protein belongs to the transketolase family. DXPS subfamily. In terms of assembly, homodimer. Mg(2+) serves as cofactor. It depends on thiamine diphosphate as a cofactor.

The enzyme catalyses D-glyceraldehyde 3-phosphate + pyruvate + H(+) = 1-deoxy-D-xylulose 5-phosphate + CO2. It participates in metabolic intermediate biosynthesis; 1-deoxy-D-xylulose 5-phosphate biosynthesis; 1-deoxy-D-xylulose 5-phosphate from D-glyceraldehyde 3-phosphate and pyruvate: step 1/1. In terms of biological role, catalyzes the acyloin condensation reaction between C atoms 2 and 3 of pyruvate and glyceraldehyde 3-phosphate to yield 1-deoxy-D-xylulose-5-phosphate (DXP). The protein is 1-deoxy-D-xylulose-5-phosphate synthase of Escherichia coli O139:H28 (strain E24377A / ETEC).